A 295-amino-acid polypeptide reads, in one-letter code: Pyridoxal 5'-phosphate synthase subunit PdxS (295 aa).

Asp25 is a binding site for D-ribose 5-phosphate. Residue Lys82 is the Schiff-base intermediate with D-ribose 5-phosphate of the active site. Gly154 provides a ligand contact to D-ribose 5-phosphate. Position 166 (Arg166) interacts with D-glyceraldehyde 3-phosphate. Residues Gly215 and 236–237 contribute to the D-ribose 5-phosphate site; that span reads GS.

It belongs to the PdxS/SNZ family. In terms of assembly, in the presence of PdxT, forms a dodecamer of heterodimers.

It carries out the reaction aldehydo-D-ribose 5-phosphate + D-glyceraldehyde 3-phosphate + L-glutamine = pyridoxal 5'-phosphate + L-glutamate + phosphate + 3 H2O + H(+). It functions in the pathway cofactor biosynthesis; pyridoxal 5'-phosphate biosynthesis. Its function is as follows. Catalyzes the formation of pyridoxal 5'-phosphate from ribose 5-phosphate (RBP), glyceraldehyde 3-phosphate (G3P) and ammonia. The ammonia is provided by the PdxT subunit. Can also use ribulose 5-phosphate and dihydroxyacetone phosphate as substrates, resulting from enzyme-catalyzed isomerization of RBP and G3P, respectively. The polypeptide is Pyridoxal 5'-phosphate synthase subunit PdxS (Staphylococcus haemolyticus (strain JCSC1435)).